A 192-amino-acid polypeptide reads, in one-letter code: Ion-translocating oxidoreductase complex subunit B (192 aa).

The hydrophobic stretch occupies residues 1–26 (MNAFWIAVAAVSLLGLAFGAILGYAS). The region spanning 32-91 (EDDPVVEKIDEILPQSQCGQCGYPGCRPYAEAISCNGEKINRCAPGGEAVMLKIAELLNV) is the 4Fe-4S domain. 12 residues coordinate [4Fe-4S] cluster: Cys-49, Cys-52, Cys-57, Cys-74, Cys-117, Cys-120, Cys-123, Cys-127, Cys-147, Cys-150, Cys-153, and Cys-157. 2 consecutive 4Fe-4S ferredoxin-type domains span residues 108–137 (MVAVIDENNCIGCTKCIQACPVDAIVGATR) and 138–167 (AMHTVMSDLCTGCNLCVDPCPTHCISLQPV).

Belongs to the 4Fe4S bacterial-type ferredoxin family. RnfB subfamily. In terms of assembly, the complex is composed of six subunits: RsxA, RsxB, RsxC, RsxD, RsxE and RsxG. The cofactor is [4Fe-4S] cluster.

The protein localises to the cell inner membrane. In terms of biological role, part of a membrane-bound complex that couples electron transfer with translocation of ions across the membrane. Required to maintain the reduced state of SoxR. The polypeptide is Ion-translocating oxidoreductase complex subunit B (Escherichia coli O6:H1 (strain CFT073 / ATCC 700928 / UPEC)).